Here is a 280-residue protein sequence, read N- to C-terminus: Probable endonuclease 4 (280 aa).

Zn(2+)-binding residues include H69, H109, E145, D179, H182, H216, D229, H231, and E261.

Belongs to the AP endonuclease 2 family. The cofactor is Zn(2+).

The enzyme catalyses Endonucleolytic cleavage to 5'-phosphooligonucleotide end-products.. Endonuclease IV plays a role in DNA repair. It cleaves phosphodiester bonds at apurinic or apyrimidinic (AP) sites, generating a 3'-hydroxyl group and a 5'-terminal sugar phosphate. This chain is Probable endonuclease 4, found in Erwinia tasmaniensis (strain DSM 17950 / CFBP 7177 / CIP 109463 / NCPPB 4357 / Et1/99).